Here is a 247-residue protein sequence, read N- to C-terminus: MAETAEKVILLTGSSKGIGLATAEALQKKAKVIAVSRSLTPELETLLIQNPDSFVHVKGDVTEVGKASIETAIKKFGKLDSVILNAGVLEPIAKIADADINEWRKLFDINFFSVVETVKYAIPHLRKTKGTIVIVSSGAAVRVFPAWAAYCCSKAAINMLVMNLGSEEPDIMSVAVRPGVVDTPMQVSIRNDSNKEAMGGDTHNFFKELKTSGQLVAPQDIAKALSFLALNNNPKLTGQFVEWKSFV.

Residues Leu-11, Asn-85, and Lys-119 each coordinate NADP(+). Ser-136 serves as the catalytic Proton donor. NADP(+)-binding residues include Tyr-150, Lys-154, Val-181, and Thr-183. Tyr-150 functions as the Proton acceptor in the catalytic mechanism. Lys-154 (lowers pKa of active site Tyr) is an active-site residue.

The protein belongs to the short-chain dehydrogenases/reductases (SDR) family.

This is an uncharacterized protein from Schizosaccharomyces pombe (strain 972 / ATCC 24843) (Fission yeast).